Reading from the N-terminus, the 293-residue chain is Lipoyl synthase (293 aa).

The [4Fe-4S] cluster site is built by cysteine 38, cysteine 43, cysteine 49, cysteine 64, cysteine 68, cysteine 71, and serine 277. Residues 50 to 266 (WSRGTATFLL…STIAKNAGIR (217 aa)) form the Radical SAM core domain.

This sequence belongs to the radical SAM superfamily. Lipoyl synthase family. The cofactor is [4Fe-4S] cluster.

It is found in the cytoplasm. The enzyme catalyses [[Fe-S] cluster scaffold protein carrying a second [4Fe-4S](2+) cluster] + N(6)-octanoyl-L-lysyl-[protein] + 2 oxidized [2Fe-2S]-[ferredoxin] + 2 S-adenosyl-L-methionine + 4 H(+) = [[Fe-S] cluster scaffold protein] + N(6)-[(R)-dihydrolipoyl]-L-lysyl-[protein] + 4 Fe(3+) + 2 hydrogen sulfide + 2 5'-deoxyadenosine + 2 L-methionine + 2 reduced [2Fe-2S]-[ferredoxin]. The protein operates within protein modification; protein lipoylation via endogenous pathway; protein N(6)-(lipoyl)lysine from octanoyl-[acyl-carrier-protein]: step 2/2. Functionally, catalyzes the radical-mediated insertion of two sulfur atoms into the C-6 and C-8 positions of the octanoyl moiety bound to the lipoyl domains of lipoate-dependent enzymes, thereby converting the octanoylated domains into lipoylated derivatives. The protein is Lipoyl synthase of Chlorobium chlorochromatii (strain CaD3).